A 93-amino-acid polypeptide reads, in one-letter code: Corticostatin 1 (93 aa).

A signal peptide spans 1-19 (MRTLILLAAILLAALQAQA). Positions 20–59 (ELFSVNVDEVLDQQQPGSDQDLVIHLTGEESSALQVPDTK) are excised as a propeptide. Disulfide bonds link C62/C90, C64/C79, and C69/C89.

Belongs to the alpha-defensin family.

It is found in the secreted. Functionally, microbicidal activity and inhibits corticotropin (ACTH) stimulated corticosterone production. The polypeptide is Corticostatin 1 (Oryctolagus cuniculus (Rabbit)).